The chain runs to 520 residues: Dynein axonemal assembly factor 8 (520 aa).

4 disordered regions span residues 93-202 (PVLV…LRQE), 217-256 (RDACGPTSSDKGGVKEAPCHAAESAPRSKMPLVEPPEGPP), 328-366 (CARKVPADTPQDTKEADSGSRCASRKQGSQAGPGPQLAQ), and 388-520 (DHLS…LEQL). Positions 111-125 (RTKDASSQEGRDPGR) are enriched in basic and acidic residues. Phosphoserine is present on Ser161. Phosphoserine is present on Ser351. Positions 401 to 410 (DSEEEEEEEM) are enriched in acidic residues. Over residues 420 to 437 (SPSSLGLRTCTGKSQLLQ) the composition is skewed to polar residues.

Expressed in respiratory ciliated cells (at protein level).

It localises to the dynein axonemal particle. The protein resides in the cytoplasm. In cyliated cells, dynein axonemal particle-specific protein required for deployment of ODA to the axoneme. Interacts with outer dynein arm (ODA) subunits. This Homo sapiens (Human) protein is Dynein axonemal assembly factor 8.